A 462-amino-acid chain; its full sequence is Siroheme synthase (462 aa).

Positions 1-203 (MQYFPIFVDT…GNNSKAEQMM (203 aa)) are precorrin-2 dehydrogenase /sirohydrochlorin ferrochelatase. NAD(+)-binding positions include 22-23 (EV) and 43-44 (PW). Residue Ser-128 is modified to Phosphoserine. The uroporphyrinogen-III C-methyltransferase stretch occupies residues 217-462 (GEVYLVGAGP…EKLNWFGADA (246 aa)). Pro-226 provides a ligand contact to S-adenosyl-L-methionine. Asp-249 (proton acceptor) is an active-site residue. Lys-271 serves as the catalytic Proton donor. S-adenosyl-L-methionine-binding positions include 302–304 (GGD), Ile-307, 332–333 (TA), Met-384, and Ala-413.

The protein in the N-terminal section; belongs to the precorrin-2 dehydrogenase / sirohydrochlorin ferrochelatase family. In the C-terminal section; belongs to the precorrin methyltransferase family.

It catalyses the reaction uroporphyrinogen III + 2 S-adenosyl-L-methionine = precorrin-2 + 2 S-adenosyl-L-homocysteine + H(+). The catalysed reaction is precorrin-2 + NAD(+) = sirohydrochlorin + NADH + 2 H(+). The enzyme catalyses siroheme + 2 H(+) = sirohydrochlorin + Fe(2+). Its pathway is cofactor biosynthesis; adenosylcobalamin biosynthesis; precorrin-2 from uroporphyrinogen III: step 1/1. It functions in the pathway cofactor biosynthesis; adenosylcobalamin biosynthesis; sirohydrochlorin from precorrin-2: step 1/1. It participates in porphyrin-containing compound metabolism; siroheme biosynthesis; precorrin-2 from uroporphyrinogen III: step 1/1. The protein operates within porphyrin-containing compound metabolism; siroheme biosynthesis; siroheme from sirohydrochlorin: step 1/1. Its pathway is porphyrin-containing compound metabolism; siroheme biosynthesis; sirohydrochlorin from precorrin-2: step 1/1. In terms of biological role, multifunctional enzyme that catalyzes the SAM-dependent methylations of uroporphyrinogen III at position C-2 and C-7 to form precorrin-2 via precorrin-1. Then it catalyzes the NAD-dependent ring dehydrogenation of precorrin-2 to yield sirohydrochlorin. Finally, it catalyzes the ferrochelation of sirohydrochlorin to yield siroheme. In Pseudoalteromonas atlantica (strain T6c / ATCC BAA-1087), this protein is Siroheme synthase.